The chain runs to 265 residues: uncharacterized protein (265 aa).

The segment at 122–145 is disordered; it reads THYRDNGQTPPRDTRPHGGISLGG.

This is an uncharacterized protein from Zymomonas mobilis subsp. mobilis (strain ATCC 31821 / ZM4 / CP4).